Reading from the N-terminus, the 467-residue chain is tRNA modification GTPase MnmE (467 aa).

(6S)-5-formyl-5,6,7,8-tetrahydrofolate is bound by residues Arg-27, Glu-89, and Arg-128. Residues 225–387 enclose the TrmE-type G domain; that stretch reads GISMVIAGRP…LKQAIFTVVT (163 aa). Asn-235 serves as a coordination point for K(+). Residues 235–240, 254–260, 279–282, and 368–370 contribute to the GTP site; these read NVGKSS, TSIAGTT, DTAG, and SAR. Position 239 (Ser-239) interacts with Mg(2+). 3 residues coordinate K(+): Thr-254, Ile-256, and Thr-259. Thr-260 contributes to the Mg(2+) binding site. Position 467 (Lys-467) interacts with (6S)-5-formyl-5,6,7,8-tetrahydrofolate.

It belongs to the TRAFAC class TrmE-Era-EngA-EngB-Septin-like GTPase superfamily. TrmE GTPase family. In terms of assembly, homodimer. Heterotetramer of two MnmE and two MnmG subunits. The cofactor is K(+).

The protein resides in the cytoplasm. Exhibits a very high intrinsic GTPase hydrolysis rate. Involved in the addition of a carboxymethylaminomethyl (cmnm) group at the wobble position (U34) of certain tRNAs, forming tRNA-cmnm(5)s(2)U34. The protein is tRNA modification GTPase MnmE of Desulfotalea psychrophila (strain LSv54 / DSM 12343).